Consider the following 355-residue polypeptide: Guanine nucleotide-binding protein G(i) subunit alpha-2 (355 aa).

G2 is lipidated: N-myristoyl glycine. C3 carries the S-palmitoyl cysteine lipid modification. One can recognise a G-alpha domain in the interval 32-355; the sequence is REVKLLLLGA…KNNLKDCGLF (324 aa). Residues 35–48 are G1 motif; it reads KLLLLGAGESGKST. GTP-binding positions include 40–47, 176–182, 201–205, 270–273, and A327; these read GAGESGKS, LRTRVKT, DVGGQ, and NKKD. Mg(2+)-binding residues include S47 and T182. The tract at residues 174 to 182 is G2 motif; the sequence is DVLRTRVKT. The interval 197-206 is G3 motif; it reads FKMFDVGGQR. The G4 motif stretch occupies residues 266–273; the sequence is ILFLNKKD. The segment at 325 to 330 is G5 motif; the sequence is TCATDT.

The protein belongs to the G-alpha family. G(i/o/t/z) subfamily. As to quaternary structure, g proteins are composed of 3 units; alpha, beta and gamma. The alpha chain contains the guanine nucleotide binding site. In this context, interacts with GNB2. Interacts with UNC5B. Interacts with GPSM1. Interacts with RGS12 and RGS14. Interacts (inactive GDP-bound form) with NUCB1 (via GBA motif); the interaction leads to activation of GNAI3. Interacts (inactive GDP-bound form) with CCDC88C/DAPLE (via GBA motif). Interacts (inactive GDP-bound form) with CCDC8A/GIV (via GBA motif). Interacts with CXCR1 and CXCR2.

The protein resides in the cytoplasm. Its subcellular location is the cytoskeleton. It is found in the microtubule organizing center. The protein localises to the centrosome. It localises to the cell membrane. The protein resides in the membrane. In terms of biological role, guanine nucleotide-binding proteins (G proteins) are involved as modulators or transducers in various transmembrane signaling systems. The G(i) proteins are involved in hormonal regulation of adenylate cyclase: they inhibit the cyclase in response to beta-adrenergic stimuli. May play a role in cell division. The polypeptide is Guanine nucleotide-binding protein G(i) subunit alpha-2 (Gnai2) (Mus musculus (Mouse)).